An 83-amino-acid polypeptide reads, in one-letter code: Large ribosomal subunit protein bL27 (83 aa).

The segment at 1-22 (MAHKKGQGSTRNGRDSHSKRLG) is disordered.

It belongs to the bacterial ribosomal protein bL27 family.

This is Large ribosomal subunit protein bL27 from Protochlamydia amoebophila (strain UWE25).